Reading from the N-terminus, the 239-residue chain is Large ribosomal subunit protein bL25 (239 aa).

The segment at 211 to 239 is disordered; that stretch reads KGKKDKEDEEAEKGTSVASPTTATGGTKK. The segment covering 226-239 has biased composition (polar residues); it reads SVASPTTATGGTKK.

The protein belongs to the bacterial ribosomal protein bL25 family. CTC subfamily. In terms of assembly, part of the 50S ribosomal subunit; part of the 5S rRNA/L5/L18/L25 subcomplex. Contacts the 5S rRNA. Binds to the 5S rRNA independently of L5 and L18.

This is one of the proteins that binds to the 5S RNA in the ribosome where it forms part of the central protuberance. This is Large ribosomal subunit protein bL25 from Endomicrobium trichonymphae.